A 60-amino-acid polypeptide reads, in one-letter code: UPF0391 membrane protein CCNA_00709 (60 aa).

2 helical membrane-spanning segments follow: residues 4–24 (WAIILAIVALIAGALGFSGLA) and 33–53 (ILFFLFLVGFVLVLLLGGTVF).

Belongs to the UPF0391 family.

The protein resides in the cell membrane. This is UPF0391 membrane protein CCNA_00709 from Caulobacter vibrioides (strain NA1000 / CB15N) (Caulobacter crescentus).